The sequence spans 631 residues: uncharacterized protein (631 aa).

The segment covering 1–19 (MSKMGSSSMGELQDGITQE) has biased composition (polar residues). The tract at residues 1–92 (MSKMGSSSMG…EENYPRLQTT (92 aa)) is disordered. Positions 67 to 76 (KKKKKKKLKK) are enriched in basic residues. The Exonuclease domain maps to 277-426 (LAIDCEMVRT…EDALACVDLL (150 aa)). The span at 517–526 (ANRNTKQENN) shows a compositional bias: polar residues. The tract at residues 517–540 (ANRNTKQENNSDTDTENDSVEEDQ) is disordered. Acidic residues predominate over residues 527 to 540 (SDTDTENDSVEEDQ).

The protein belongs to the REXO1/REXO3 family.

The protein localises to the nucleus. This is an uncharacterized protein from Schizosaccharomyces pombe (strain 972 / ATCC 24843) (Fission yeast).